Reading from the N-terminus, the 339-residue chain is Ferredoxin--NADP reductase (339 aa).

The FAD site is built by Glu-35, Gln-43, Tyr-48, Val-88, Phe-122, Asp-287, and Ser-327.

The protein belongs to the ferredoxin--NADP reductase type 2 family. Homodimer. FAD is required as a cofactor.

The enzyme catalyses 2 reduced [2Fe-2S]-[ferredoxin] + NADP(+) + H(+) = 2 oxidized [2Fe-2S]-[ferredoxin] + NADPH. The protein is Ferredoxin--NADP reductase of Leuconostoc citreum (strain KM20).